We begin with the raw amino-acid sequence, 260 residues long: Cytochrome c oxidase subunit 3 (260 aa).

Transmembrane regions (helical) follow at residues 14–34 (PWPL…ILWF), 41–61 (LLLA…RDVI), 81–101 (GMIL…WAFF), 126–146 (FLVP…VTWA), 158–178 (AIQG…LQAW), 196–216 (FFVA…FLFI), and 238–258 (AWYW…ICWW).

This sequence belongs to the cytochrome c oxidase subunit 3 family. As to quaternary structure, component of the cytochrome c oxidase (complex IV, CIV), a multisubunit enzyme composed of a catalytic core of 3 subunits and several supernumerary subunits. The complex exists as a monomer or a dimer and forms supercomplexes (SCs) in the inner mitochondrial membrane with ubiquinol-cytochrome c oxidoreductase (cytochrome b-c1 complex, complex III, CIII).

The protein resides in the mitochondrion inner membrane. The enzyme catalyses 4 Fe(II)-[cytochrome c] + O2 + 8 H(+)(in) = 4 Fe(III)-[cytochrome c] + 2 H2O + 4 H(+)(out). Its function is as follows. Component of the cytochrome c oxidase, the last enzyme in the mitochondrial electron transport chain which drives oxidative phosphorylation. The respiratory chain contains 3 multisubunit complexes succinate dehydrogenase (complex II, CII), ubiquinol-cytochrome c oxidoreductase (cytochrome b-c1 complex, complex III, CIII) and cytochrome c oxidase (complex IV, CIV), that cooperate to transfer electrons derived from NADH and succinate to molecular oxygen, creating an electrochemical gradient over the inner membrane that drives transmembrane transport and the ATP synthase. Cytochrome c oxidase is the component of the respiratory chain that catalyzes the reduction of oxygen to water. Electrons originating from reduced cytochrome c in the intermembrane space (IMS) are transferred via the dinuclear copper A center (CU(A)) of subunit 2 and heme A of subunit 1 to the active site in subunit 1, a binuclear center (BNC) formed by heme A3 and copper B (CU(B)). The BNC reduces molecular oxygen to 2 water molecules using 4 electrons from cytochrome c in the IMS and 4 protons from the mitochondrial matrix. The protein is Cytochrome c oxidase subunit 3 (COIII) of Patiria pectinifera (Starfish).